The chain runs to 6077 residues: Nonribosomal peptide synthetase nlsA (6077 aa).

An adenylation 1 region spans residues 417–618 (VFAYAPLIHG…LGRKDSQIKL (202 aa)). Positions 751–827 (HSEVTVEDRL…DLVTRVQEIK (77 aa)) constitute a Carrier 1 domain. Position 788 is an O-(pantetheine 4'-phosphoryl)serine (serine 788). Condensation stretches follow at residues 842-1267 (LSPI…GKRL) and 1309-1737 (EDIY…KQRI). Adenylation regions lie at residues 1757–2149 (QEKM…YLGE) and 2755–3157 (DRVI…QVKL). A Carrier 2 domain is found at 3297–3373 (AVERAAESTL…DMAKCCDDTE (77 aa)). Serine 3334 is modified (O-(pantetheine 4'-phosphoryl)serine). A condensation 3 region spans residues 3524-3779 (DSRYRQCLYK…LLSVPRDSLM (256 aa)). Positions 3816-4213 (ENAIMHPQAT…LGRKDHQVKL (398 aa)) are adenylation 4. In terms of domain architecture, Carrier 3 spans 4361–4437 (REGDATPAII…ELAVSCGTKP (77 aa)). Position 4398 is an O-(pantetheine 4'-phosphoryl)serine (serine 4398). Condensation regions lie at residues 4451-4869 (PLSP…RVLE) and 4916-5260 (VEDI…EDKT). The Carrier 4 domain maps to 5334–5410 (RAPNDSEKQL…NMMALINDRK (77 aa)). O-(pantetheine 4'-phosphoryl)serine is present on serine 5371. Residues 5476–5885 (DVLPVTDFQA…SLVANPNVAL (410 aa)) form a condensation 6 region. The Carrier 5 domain occupies 5921 to 6004 (SEILVHSDLI…GHMAVLALNM (84 aa)). A compositionally biased stretch (low complexity) spans 6013–6027 (DSDAAPAPAYAPVDA). The disordered stretch occupies residues 6013 to 6047 (DSDAAPAPAYAPVDARASRNVSTSRQQQEGLPLPA). A compositionally biased stretch (polar residues) spans 6031–6041 (RNVSTSRQQQE).

It belongs to the NRP synthetase family.

The protein operates within secondary metabolite biosynthesis. Nonribosomal peptide synthetase involved in the synthesis of nidulanin A and derived compounds. Nidulanin A is a tetracyclopeptide with the sequence L-Phe-L-Kyn-L-Val-D-Val and an isoprene unit N-linked to the amino group of L-kynurenine. The NRPS nlsA is responsible of the synthesis of the cyclopeptide and the prenyltransferase nptA adds the isoprene unit on the L-kynurenine residue of nidulanin A. Further modifications lead to additional oxygenated related compounds. The chain is Nonribosomal peptide synthetase nlsA from Emericella nidulans (strain FGSC A4 / ATCC 38163 / CBS 112.46 / NRRL 194 / M139) (Aspergillus nidulans).